A 288-amino-acid polypeptide reads, in one-letter code: Diaminopimelate epimerase (288 aa).

Substrate contacts are provided by N14 and N67. The active-site Proton donor is the C76. Substrate contacts are provided by residues 77–78 (GN), N166, N199, and 217–218 (ER). Residue C226 is the Proton acceptor of the active site. Substrate is bound at residue 227 to 228 (GT).

The protein belongs to the diaminopimelate epimerase family. In terms of assembly, homodimer.

It localises to the cytoplasm. It catalyses the reaction (2S,6S)-2,6-diaminopimelate = meso-2,6-diaminopimelate. It participates in amino-acid biosynthesis; L-lysine biosynthesis via DAP pathway; DL-2,6-diaminopimelate from LL-2,6-diaminopimelate: step 1/1. Functionally, catalyzes the stereoinversion of LL-2,6-diaminopimelate (L,L-DAP) to meso-diaminopimelate (meso-DAP), a precursor of L-lysine and an essential component of the bacterial peptidoglycan. In Bacillus cereus (strain B4264), this protein is Diaminopimelate epimerase.